The primary structure comprises 561 residues: Transmembrane protein 151B (561 aa).

Residues methionine 1–glutamate 10 are compositionally biased toward low complexity. Residues methionine 1 to proline 42 form a disordered region. Positions serine 11–glycine 22 are enriched in gly residues. 2 helical membrane-spanning segments follow: residues cysteine 59–threonine 79 and tyrosine 106–tryptophan 126. A compositionally biased stretch (polar residues) spans valine 489–methionine 507. The tract at residues valine 489–proline 523 is disordered. The span at asparagine 510 to alanine 519 shows a compositional bias: acidic residues.

Belongs to the TMEM151 family.

The protein localises to the membrane. This Mus musculus (Mouse) protein is Transmembrane protein 151B (Tmem151b).